Consider the following 123-residue polypeptide: Signal recognition particle 14 kDa protein (123 aa).

The interval 99–123 is disordered; that stretch reads KKKPTPTTTPSSSTTAKTAAKKTKV. Residues 103-116 show a composition bias toward low complexity; the sequence is TPTTTPSSSTTAKT.

The protein belongs to the SRP14 family. As to quaternary structure, heterodimer with srp9; binds RNA as heterodimer. Component of a signal recognition particle (SRP) complex that consists of a 7SL RNA molecule and six protein subunits: srp72, srp68, srp54, srp19, srp14 and srp9.

Its subcellular location is the cytoplasm. Component of the signal recognition particle (SRP) complex, a ribonucleoprotein complex that mediates the cotranslational targeting of secretory and membrane proteins to the endoplasmic reticulum (ER). Srp9 together with srp14 and the Alu portion of the SRP RNA, constitutes the elongation arrest domain of SRP. The complex of srp9 and srp14 is required for SRP RNA binding. This Dictyostelium discoideum (Social amoeba) protein is Signal recognition particle 14 kDa protein (srp14-1).